Reading from the N-terminus, the 226-residue chain is Gap junction beta-2 protein (226 aa).

An intramembrane segment occupies 2-13 (DWGALQTILGGV). Topologically, residues 14 to 20 (NKYSTSI) are cytoplasmic. Residues 21-40 (GKIWLTVLFIFRIMILVVAA) form a helical membrane-spanning segment. At 41 to 73 (KEVWGDEQADFVCNTLQPGCKNVCYDHYFPISH) the chain is on the extracellular side. Positions 42, 45, and 47 each coordinate Ca(2+). Intrachain disulfides connect cysteine 53–cysteine 180, cysteine 60–cysteine 174, and cysteine 64–cysteine 169. A helical transmembrane segment spans residues 74 to 94 (IRLWALQLIFVSTPALLVAMH). Residues 95 to 135 (VAYRRHEKKRKFIKGEIKNEFKDIEEIKTQKVRIEGSLWWT) are Cytoplasmic-facing. The chain crosses the membrane as a helical span at residues 136–156 (YTSSIFFRVVFEAAFMYVFYV). Topologically, residues 157 to 189 (MYDGFSMQRLVKCNAWPCPNTVDCFVSRPTEKT) are extracellular. The helical transmembrane segment at 190-210 (VFTVFMIAVSGICILLNVTEL) threads the bilayer. The Cytoplasmic segment spans residues 211 to 226 (CYLLIRYCSGKSKKPV).

The protein belongs to the connexin family. Beta-type (group I) subfamily. As to quaternary structure, a hemichannel or connexon is composed of a hexamer of connexins. A functional gap junction is formed by the apposition of two hemichannels. Forms heteromeric channels with GJB4. Interacts with CNST.

It localises to the cell membrane. The protein localises to the cell junction. It is found in the gap junction. Functionally, structural component of gap junctions. Gap junctions are dodecameric channels that connect the cytoplasm of adjoining cells. They are formed by the docking of two hexameric hemichannels, one from each cell membrane. Small molecules and ions diffuse from one cell to a neighboring cell via the central pore. In Macaca mulatta (Rhesus macaque), this protein is Gap junction beta-2 protein (GJB2).